We begin with the raw amino-acid sequence, 98 residues long: Acylphosphatase (98 aa).

One can recognise an Acylphosphatase-like domain in the interval 12–98 (TYYVRVRGVV…ERRFDRFQQQ (87 aa)). Residues Arg-27 and Asn-45 contribute to the active site.

This sequence belongs to the acylphosphatase family.

The catalysed reaction is an acyl phosphate + H2O = a carboxylate + phosphate + H(+). This chain is Acylphosphatase (acyP), found in Burkholderia ambifaria (strain ATCC BAA-244 / DSM 16087 / CCUG 44356 / LMG 19182 / AMMD) (Burkholderia cepacia (strain AMMD)).